A 40-amino-acid polypeptide reads, in one-letter code: Alpha-conotoxin-like Qc1.4b (40 aa).

Positions 1 to 19 (SDGRNTAANDKASDLMALR) are excised as a propeptide. Cystine bridges form between Cys22/Cys28 and Cys23/Cys36. Positions 24-26 (PNP) are lacks the Ser-Xaa-Pro motif that is crucial for potent interaction with nAChR. A Cysteine amide modification is found at Cys36. A propeptide spanning residues 37–40 (GGGR) is cleaved from the precursor.

This sequence belongs to the conotoxin A superfamily. Expressed by the venom duct.

Its subcellular location is the secreted. In terms of biological role, alpha-conotoxins act on postsynaptic membranes, they bind to the nicotinic acetylcholine receptors (nAChR) and thus inhibit them. Has possibly a distinct nAChR binding mode from other alpha-conotoxins, due to a different three residue motif (lacks the Ser-Xaa-Pro motif). In Conus quercinus (Oak cone), this protein is Alpha-conotoxin-like Qc1.4b.